Here is a 142-residue protein sequence, read N- to C-terminus: Large ribosomal subunit protein uL11 (142 aa).

The protein belongs to the universal ribosomal protein uL11 family. As to quaternary structure, part of the ribosomal stalk of the 50S ribosomal subunit. Interacts with L10 and the large rRNA to form the base of the stalk. L10 forms an elongated spine to which L12 dimers bind in a sequential fashion forming a multimeric L10(L12)X complex. In terms of processing, one or more lysine residues are methylated.

Forms part of the ribosomal stalk which helps the ribosome interact with GTP-bound translation factors. The polypeptide is Large ribosomal subunit protein uL11 (Bradyrhizobium sp. (strain ORS 278)).